Reading from the N-terminus, the 70-residue chain is Conotoxin Lt3.4 (70 aa).

The first 24 residues, methionine 1–alanine 24, serve as a signal peptide directing secretion. A propeptide spanning residues aspartate 25 to arginine 54 is cleaved from the precursor. Glutamine 55 is modified (pyrrolidone carboxylic acid). 3 cysteine pairs are disulfide-bonded: cysteine 56–cysteine 68, cysteine 57–cysteine 66, and cysteine 62–cysteine 69.

This sequence belongs to the conotoxin M superfamily. In terms of tissue distribution, expressed by the venom duct.

Its subcellular location is the secreted. This is Conotoxin Lt3.4 from Conus litteratus (Lettered cone).